The chain runs to 683 residues: MNEKTRKNISAAGLLIAIGIVYGDIGTSPLYVMKSIVAGNGGIANVNRDFIVGSISLVLWTVTLLTTLQTVFIALKATNHGEGGIFALYTLVRKRAKWLVLPALIGGAAILADGTLTPAVTVTTAIEGLKGIEFGHGNVPVSTQGTVIAITVVILLLLFSIQRMGTSIIGKAFGPIMFIWFTFLGVIGLMNMMGDLSILQALNPYYAIKLLFSPYNKAGIFILGSIFLATTGAEALYSDVGHVGKGNIIGSWPYVFVCLSLNYFGQGVWILNNPNYNAGNGDFNPFFEIIPQNIRLAAIVLATIAAVIASQALITGSFTLVAEASGLKFLPRMNIMYPSTKKGQIYIPSVNKMICAATIAIVLFFQTSAHMEAAYGLSITISMLMTTILLYEWLAMKGVHTIWNWLFLIFFGFLDVMFMLASLSKFMHGGYVSLVIAGFIGIIMYVWYYGNKIRDKRESRNAYVRLDEYVDMLTNLSHDEDYPTFATNLVYMAKVKYNKFIKREILYSILDKRPKRARAYWFVTVNVTNEPFTAEYAVNTYGTKNVINVQLFLGFKQQTSVNVYLRQIVHDLIADGTIESQPQEYTTTPGRDVGDFSFVIVNDVISPQTQLRSYEKFLVEARVWLQNLSSNPASWFGLDYADTVIERVPLILGNQRRQHITRIPPKKFEDIKKKLQAEGELKE.

12 consecutive transmembrane segments (helical) span residues 13-33 (GLLIAIGIVYGDIGTSPLYVM), 55-75 (ISLVLWTVTLLTTLQTVFIAL), 98-118 (WLVLPALIGGAAILADGTLTP), 139-159 (VPVSTQGTVIAITVVILLLLF), 168-188 (IIGKAFGPIMFIWFTFLGVIG), 218-238 (AGIFILGSIFLATTGAEALYS), 251-271 (SWPYVFVCLSLNYFGQGVWIL), 296-316 (LAAIVLATIAAVIASQALITG), 345-365 (IYIPSVNKMICAATIAIVLFF), 376-396 (GLSITISMLMTTILLYEWLAM), 401-421 (TIWNWLFLIFFGFLDVMFMLA), and 426-446 (FMHGGYVSLVIAGFIGIIMYV).

It belongs to the HAK/KUP transporter (TC 2.A.72) family.

It is found in the cell membrane. It carries out the reaction K(+)(in) + H(+)(in) = K(+)(out) + H(+)(out). Its function is as follows. Transport of potassium into the cell. Likely operates as a K(+):H(+) symporter. The polypeptide is Probable potassium transport system protein Kup 1 (Lactobacillus johnsonii (strain CNCM I-12250 / La1 / NCC 533)).